The sequence spans 214 residues: Cell division protein SepF (214 aa).

A disordered region spans residues 25 to 51; the sequence is EDDDRGARAGGYSRRPREDRFEEEAYG.

The protein belongs to the SepF family. As to quaternary structure, homodimer. Interacts with FtsZ.

It localises to the cytoplasm. Functionally, cell division protein that is part of the divisome complex and is recruited early to the Z-ring. Probably stimulates Z-ring formation, perhaps through the cross-linking of FtsZ protofilaments. Its function overlaps with FtsA. The protein is Cell division protein SepF of Mycolicibacterium smegmatis (strain ATCC 700084 / mc(2)155) (Mycobacterium smegmatis).